The chain runs to 309 residues: Dihydroorotate dehydrogenase B (NAD(+)), catalytic subunit (309 aa).

FMN-binding positions include Ser21 and 45 to 46; that span reads KA. Residues Lys45 and 69 to 73 contribute to the substrate site; that span reads NAIGL. FMN is bound by residues Asn99 and Asn127. Asn127 lines the substrate pocket. The active-site Nucleophile is the Cys130. Residues Lys165 and Ile191 each contribute to the FMN site. 192–193 lines the substrate pocket; the sequence is NT. FMN-binding positions include Gly217, 243–244, and 265–266; these read GG and GT.

It belongs to the dihydroorotate dehydrogenase family. Type 1 subfamily. As to quaternary structure, heterotetramer of 2 PyrK and 2 PyrD type B subunits. FMN serves as cofactor.

Its subcellular location is the cytoplasm. It catalyses the reaction (S)-dihydroorotate + NAD(+) = orotate + NADH + H(+). It functions in the pathway pyrimidine metabolism; UMP biosynthesis via de novo pathway; orotate from (S)-dihydroorotate (NAD(+) route): step 1/1. In terms of biological role, catalyzes the conversion of dihydroorotate to orotate with NAD(+) as electron acceptor. In Bacillus cereus (strain B4264), this protein is Dihydroorotate dehydrogenase B (NAD(+)), catalytic subunit (pyrD).